The primary structure comprises 634 residues: Chaperone protein dnaK2 (634 aa).

Phosphothreonine; by autocatalysis is present on Thr197. Over residues 601–620 (SAEASANAQAGPSSSSSSSS) the composition is skewed to low complexity. Residues 601–634 (SAEASANAQAGPSSSSSSSSGDDDVIDAEFSESK) form a disordered region. The segment covering 621-634 (GDDDVIDAEFSESK) has biased composition (acidic residues).

It belongs to the heat shock protein 70 family.

Acts as a chaperone. In Synechococcus elongatus (strain ATCC 33912 / PCC 7942 / FACHB-805) (Anacystis nidulans R2), this protein is Chaperone protein dnaK2 (dnaK2).